A 72-amino-acid polypeptide reads, in one-letter code: UPF0270 protein ETA_31870 (72 aa).

This sequence belongs to the UPF0270 family.

The protein is UPF0270 protein ETA_31870 of Erwinia tasmaniensis (strain DSM 17950 / CFBP 7177 / CIP 109463 / NCPPB 4357 / Et1/99).